A 194-amino-acid polypeptide reads, in one-letter code: UPF0215 protein PF2042 (194 aa).

Belongs to the UPF0215 family.

This chain is UPF0215 protein PF2042, found in Pyrococcus furiosus (strain ATCC 43587 / DSM 3638 / JCM 8422 / Vc1).